Consider the following 499-residue polypeptide: Neuronal acetylcholine receptor subunit alpha-3 (499 aa).

Residues 1-25 (MGVVLLPPPLSMLMLVLMLLPAASA) form the signal peptide. Topologically, residues 26–244 (SEAEHRLFQY…PLFYTINLII (219 aa)) are extracellular. 2 N-linked (GlcNAc...) asparagine glycosylation sites follow: asparagine 49 and asparagine 166. 2 disulfides stabilise this stretch: cysteine 153–cysteine 167 and cysteine 217–cysteine 218. Residues 245–260 (PCLLISFLTVLVFYLP) traverse the membrane as a helical segment. The Cytoplasmic segment spans residues 261–262 (SD). A helical membrane pass occupies residues 263-279 (CGEKVTLCISVLLSLTV). Glutamate 265 is a binding site for Na(+). At 280-301 (FLLVITETIPSTSLVIPLIGEY) the chain is on the extracellular side. Residues 302 to 320 (LLFTMIFVTLSIVITVFVL) traverse the membrane as a helical segment. Over 321-468 (NVHYRTPTTH…QDDWKYVAMV (148 aa)) the chain is Cytoplasmic. Residues serine 407 and serine 410 each carry the phosphoserine modification. The chain crosses the membrane as a helical span at residues 469–487 (IDRIFLWVFILVCILGTAG). Residues 488-499 (LFLQPLMARDDT) lie on the Extracellular side of the membrane.

The protein belongs to the ligand-gated ion channel (TC 1.A.9) family. Acetylcholine receptor (TC 1.A.9.1) subfamily. Alpha-3/CHRNA3 sub-subfamily. Neuronal AChR is composed of two different types of subunits: alpha and beta. CHRNA3/Alpha-3 subunit can be combined to CHRNB2/beta-2 or CHRNB4/beta-4 to give rise to functional receptors. Part of a complex composed of STUB1/CHIP, VCP/p97, CHRNA3, and UBXN2A that modulates the ubiquitination and endoplasmic reticulum-associated degradation (ERAD) of CHRNA3. Within the complex UBXN2A acts as a scaffold protein required for the interaction of CHRNA3 with VCP/p97, this interaction also inhibits CHRNA3 ubiquitination by STUB1/CHIP and subsequently ERAD. Interacts with UBXN2A (via SEP domain), the interaction is required for the interaction of CHRNA3 in the STUB1:VCP:UBXN2A complex. Interacts with RIC3; which is required for proper folding and assembly. In terms of processing, ubiquitinated; by STUB1/CHIP and thereafter degraded by the 26S proteosome complex. Expressed in neurons. Expressed in umbrella cells of urothelium (at protein level).

Its subcellular location is the synaptic cell membrane. It is found in the cell membrane. The protein localises to the endoplasmic reticulum. The protein resides in the golgi apparatus. It catalyses the reaction Ca(2+)(in) = Ca(2+)(out). The enzyme catalyses K(+)(in) = K(+)(out). It carries out the reaction Na(+)(in) = Na(+)(out). With respect to regulation, activated by a myriad of ligands such as acetylcholine, cytisine, nicotine, choline and epibatidine. The heteropentamer CHRNA3:CHRNB2 activity is blocked by alpha-conotoxins ImI, ImII, PnIA, GID and MII. The heteropentamer CHRNA3:CHRNB4 activity is blocked by the alpha-conotoxin ImI and AuIB. In terms of biological role, component of neuronal acetylcholine receptors (nAChRs) that function as pentameric, ligand-gated cation channels with high calcium permeability among other activities. nAChRs are excitatory neurotrasnmitter receptors formed by a collection of nAChR subunits known to mediate synaptic transmission in the nervous system and the neuromuscular junction. Each nAchR subunit confers differential attributes to channel properties, including activation, deactivation and desensitization kinetics, pH sensitivity, cation permeability, and binding to allosteric modulators. CHRNA3 forms heteropentameric neuronal acetylcholine receptors with CHRNB2 and CHRNB4. CHRNA3:CHRNB4 being predominant in neurons of the autonomic ganglia, it is known as ganglionic nicotinic receptor. CHRNA3:CHRNB4 also plays an important role in the habenulo-interpeduncular tract, modulating the mesolimbic dopamine system and affecting reward circuits and addiction. Hypothalamic CHRNA3:CHRNB4 nAChR activation by nicotine leads to activation of POMC neurons and a decrease in food intake. Also expressed in the urothelium where it modulates reflex bladder activity by increasing intracellular calcium through extracellular influx and basal ATP release. This Rattus norvegicus (Rat) protein is Neuronal acetylcholine receptor subunit alpha-3 (Chrna3).